An 869-amino-acid polypeptide reads, in one-letter code: Speckle targeted PIP5K1A-regulated poly(A) polymerase (869 aa).

The Matrin-type zinc finger occupies Phe16–Leu46. Residues Arg56–Gln128 enclose the RRM domain. A disordered region spans residues Gln111–His147. Ser205 is an ATP binding site. The Mg(2+) site is built by Asp216 and Asp218. Residues Asp216 and Asp218 each contribute to the UTP site. Positions Gln252–Gly315 are disordered. Pro residues predominate over residues Ala259–Pro269. Over residues Thr279–Asp290 the composition is skewed to polar residues. ATP is bound at residue Asn391. Residues Asn391, Arg413, Tyr431, and His548 each coordinate UTP. The PAP-associated domain occupies Leu490–His548. The interval Ser597–Leu869 is KA1; binds the bulging loops of U6 snRNA but is dispensable for terminal uridylyltransferase activity. Basic and acidic residues-rich tracts occupy residues Gly637–Pro648 and Leu660–Asp686. 2 disordered regions span residues Gly637–Asp686 and Leu720–Gly755. 2 positions are modified to phosphoserine: Ser684 and Ser748.

The protein belongs to the DNA polymerase type-B-like family. As to quaternary structure, associates with the cleavage and polyadenylation specificity factor (CPSF) complex. Interacts with CPSF1 and CPSF3; the interaction is direct. Interacts with PIP5K1A. Requires Mg(2+) as cofactor. The cofactor is Mn(2+). In terms of processing, phosphorylated by CK1 in the proline-rich (Pro-rich) region.

It localises to the nucleus. The protein localises to the nucleolus. Its subcellular location is the nucleus speckle. It catalyses the reaction RNA(n) + UTP = RNA(n)-3'-uridine ribonucleotide + diphosphate. It carries out the reaction RNA(n) + ATP = RNA(n)-3'-adenine ribonucleotide + diphosphate. Adenylyltransferase activity is specifically phosphatidylinositol 4,5-bisphosphate (PtdIns(4,5)P2). Its function is as follows. Poly(A) polymerase that creates the 3'-poly(A) tail of specific pre-mRNAs. Localizes to nuclear speckles together with PIP5K1A and mediates polyadenylation of a select set of mRNAs, such as HMOX1. In addition to polyadenylation, it is also required for the 3'-end cleavage of pre-mRNAs: binds to the 3'UTR of targeted pre-mRNAs and promotes the recruitment and assembly of the CPSF complex on the 3'UTR of pre-mRNAs. In addition to adenylyltransferase activity, also has uridylyltransferase activity. However, the ATP ratio is higher than UTP in cells, suggesting that it functions primarily as a poly(A) polymerase. Acts as a specific terminal uridylyltransferase for U6 snRNA in vitro: responsible for a controlled elongation reaction that results in the restoration of the four 3'-terminal UMP-residues found in newly transcribed U6 snRNA. Not involved in replication-dependent histone mRNA degradation. The sequence is that of Speckle targeted PIP5K1A-regulated poly(A) polymerase (TUT1) from Ailuropoda melanoleuca (Giant panda).